The sequence spans 182 residues: Nucleosome assembly protein 1-like 5 (182 aa).

Residues 1-71 (MADSENQGPA…APKPKNDFIE (71 aa)) are disordered. Composition is skewed to low complexity over residues 7–21 (QGPA…AAEA) and 28–49 (AEGG…SAAG). A coiled-coil region spans residues 81–107 (VLALKKLQKRCDKIEAKFDKEFQALEK). Residues 134–182 (LEGEEEEEEEYEDDEEEGEDEEEEEAAAEAAAGAKHDDAHAEMPDDAKK) are disordered. Acidic residues predominate over residues 135–160 (EGEEEEEEEYEDDEEEGEDEEEEEAA). Positions 167 to 182 (AKHDDAHAEMPDDAKK) are enriched in basic and acidic residues.

The protein belongs to the nucleosome assembly protein (NAP) family. Predominantly expressed in brain.

It localises to the nucleus. The protein is Nucleosome assembly protein 1-like 5 (NAP1L5) of Homo sapiens (Human).